Reading from the N-terminus, the 67-residue chain is Penaeidin-4c (67 aa).

The signal sequence occupies residues 1-19; the sequence is MRLVVCLVFLASFALVCQG. Disulfide bonds link C42/C56, C45/C63, and C57/C64. R66 carries the arginine amide modification.

Belongs to the penaeidin family.

It is found in the cytoplasmic granule. Antibacterial and antifungal activity. Presents chitin-binding activity. This Penaeus vannamei (Whiteleg shrimp) protein is Penaeidin-4c.